The sequence spans 837 residues: Protein translocase subunit SecA (837 aa).

Residues Q85, 103-107 (GEGKT), and D493 each bind ATP. Zn(2+) contacts are provided by C821, C823, C832, and H833.

Belongs to the SecA family. As to quaternary structure, monomer and homodimer. Part of the essential Sec protein translocation apparatus which comprises SecA, SecYEG and auxiliary proteins SecDF. Other proteins may also be involved. The cofactor is Zn(2+).

The protein localises to the cell membrane. It is found in the cytoplasm. It carries out the reaction ATP + H2O + cellular proteinSide 1 = ADP + phosphate + cellular proteinSide 2.. Functionally, part of the Sec protein translocase complex. Interacts with the SecYEG preprotein conducting channel. Has a central role in coupling the hydrolysis of ATP to the transfer of proteins into and across the cell membrane, serving as an ATP-driven molecular motor driving the stepwise translocation of polypeptide chains across the membrane. The sequence is that of Protein translocase subunit SecA from Streptococcus pneumoniae (strain P1031).